Consider the following 182-residue polypeptide: UPF0397 protein BCG9842_B2659 (182 aa).

The next 5 helical transmembrane spans lie at 9–29 (VVAI…GFSI), 40–60 (AILT…IGLI), 71–91 (WGIW…MGLI), 114–134 (ITGL…DIIV), and 142–162 (IVIQ…VLGL).

This sequence belongs to the UPF0397 family.

It localises to the cell membrane. This chain is UPF0397 protein BCG9842_B2659, found in Bacillus cereus (strain G9842).